The sequence spans 335 residues: Heme A synthase (335 aa).

The next 8 helical transmembrane spans lie at 9 to 29 (VAIW…IGGF), 90 to 110 (YVHR…FIYF), 120 to 140 (VVIR…TGWY), 156 to 176 (MLTL…YQFF), 197 to 217 (VGII…VAGL), 255 to 275 (VQFI…VLTI), 283 to 303 (VYVM…TLLL), and 309 to 329 (IAIS…CFLC). Residue His-259 coordinates heme. His-313 contacts heme.

This sequence belongs to the COX15/CtaA family. Type 2 subfamily. Interacts with CtaB. Heme b is required as a cofactor.

The protein resides in the cell membrane. The catalysed reaction is Fe(II)-heme o + 2 A + H2O = Fe(II)-heme a + 2 AH2. It functions in the pathway porphyrin-containing compound metabolism; heme A biosynthesis; heme A from heme O: step 1/1. Catalyzes the conversion of heme O to heme A by two successive hydroxylations of the methyl group at C8. The first hydroxylation forms heme I, the second hydroxylation results in an unstable dihydroxymethyl group, which spontaneously dehydrates, resulting in the formyl group of heme A. This chain is Heme A synthase, found in Wolbachia sp. subsp. Brugia malayi (strain TRS).